Consider the following 2253-residue polypeptide: Protein Ycf2 (2253 aa).

Residue 1600-1607 (GFIGTGRS) coordinates ATP.

It belongs to the Ycf2 family.

It is found in the plastid. It localises to the chloroplast stroma. Probable ATPase of unknown function. Its presence in a non-photosynthetic plant (Epifagus virginiana) and experiments in tobacco indicate that it has an essential function which is probably not related to photosynthesis. The polypeptide is Protein Ycf2 (Nymphaea alba (White water-lily)).